The sequence spans 415 residues: Casein kinase I isoform delta (415 aa).

A Protein kinase domain is found at 9–277 (YRLGRKIGSG…YLRQLFRNLF (269 aa)). Residues 15–23 (IGSGSFGDI) and K38 contribute to the ATP site. Catalysis depends on D128, which acts as the Proton acceptor. Residues 278-364 (HRQGFSYDYV…TSPRPVSGME (87 aa)) form a centrosomal localization signal (CLS) region. The segment covering 301 to 315 (ADDAERERRDREERL) has biased composition (basic and acidic residues). A disordered region spans residues 301 to 415 (ADDAERERRD…SSGLQSVVHR (115 aa)). The interval 317 to 342 (HSRNPATRGLPSTASGRLRGTQEVAP) is autoinhibitory. A phosphoserine mark is found at S328 and S331. Residues 347–358 (TPTSHTANTSPR) are compositionally biased toward polar residues. S370 carries the phosphoserine modification. R375 is subject to Omega-N-methylarginine. The span at 380–400 (NISSSDLTGRQDTSRMSTSQI) shows a compositional bias: polar residues. S382, S383, S384, S407, and S411 each carry phosphoserine.

The protein belongs to the protein kinase superfamily. CK1 Ser/Thr protein kinase family. Casein kinase I subfamily. In terms of assembly, monomer. Component of the circadian core oscillator, which includes the CRY proteins, CLOCK, or NPAS2, ARTNL/BMAL1 or ARTNL2/BMAL2, CSNK1D and/or CSNK1E, TIMELESS and the PER proteins. Interacts with DNMT1 and MAP1A. Interacts directly with PER1 and PER2 which may lead to their degradation. Interacts with MAPT/TAU, SNAPIN, DBNDD2, AIB1/NCOA3 and ESR1. Interacts with AKAP9/AKAP450; this interaction promotes centrosomal subcellular location. Binds to tubulins in mitotic cells upon DNA damage. Interacts with GJA1. Interacts with DDX3X; this interaction enhances CSNK1D kinase activity in vitro, but it is unclear whether this interaction is physiologically relevant. Interacts with FAM83A, FAM83B, FAM83E and FAM83H (via DUF1669). Autophosphorylated on serine and threonine residues; this autophosphorylation represses activity. Reactivated by phosphatase-mediated dephosphorylation. May be dephosphorylated by PP1.

Its subcellular location is the cytoplasm. It is found in the nucleus. It localises to the cytoskeleton. The protein resides in the microtubule organizing center. The protein localises to the centrosome. Its subcellular location is the perinuclear region. It is found in the cell membrane. It localises to the spindle. The protein resides in the golgi apparatus. The catalysed reaction is L-seryl-[protein] + ATP = O-phospho-L-seryl-[protein] + ADP + H(+). It carries out the reaction L-threonyl-[protein] + ATP = O-phospho-L-threonyl-[protein] + ADP + H(+). The enzyme catalyses L-seryl-[tau protein] + ATP = O-phospho-L-seryl-[tau protein] + ADP + H(+). It catalyses the reaction L-threonyl-[tau protein] + ATP = O-phospho-L-threonyl-[tau protein] + ADP + H(+). Exhibits substrate-dependent heparin activation. Drug-mediated inhibition leads to a delay of the oscillations with the magnitude of this effect dependent upon the timing of drug administration. Inhibited by phosphorylation. Functionally, essential serine/threonine-protein kinase that regulates diverse cellular growth and survival processes including Wnt signaling, DNA repair and circadian rhythms. It can phosphorylate a large number of proteins. Casein kinases are operationally defined by their preferential utilization of acidic proteins such as caseins as substrates. Phosphorylates connexin-43/GJA1, MAP1A, SNAPIN, MAPT/TAU, TOP2A, DCK, HIF1A, EIF6, p53/TP53, DVL2, DVL3, ESR1, AIB1/NCOA3, DNMT1, PKD2, YAP1, PER1 and PER2. Central component of the circadian clock. In balance with PP1, determines the circadian period length through the regulation of the speed and rhythmicity of PER1 and PER2 phosphorylation. Controls PER1 and PER2 nuclear transport and degradation. YAP1 phosphorylation promotes its SCF(beta-TRCP) E3 ubiquitin ligase-mediated ubiquitination and subsequent degradation. DNMT1 phosphorylation reduces its DNA-binding activity. Phosphorylation of ESR1 and AIB1/NCOA3 stimulates their activity and coactivation. Phosphorylation of DVL2 and DVL3 regulates WNT3A signaling pathway that controls neurite outgrowth. Phosphorylates NEDD9/HEF1. EIF6 phosphorylation promotes its nuclear export. Triggers down-regulation of dopamine receptors in the forebrain. Activates DCK in vitro by phosphorylation. TOP2A phosphorylation favors DNA cleavable complex formation. May regulate the formation of the mitotic spindle apparatus in extravillous trophoblast. Modulates connexin-43/GJA1 gap junction assembly by phosphorylation. Probably involved in lymphocyte physiology. Regulates fast synaptic transmission mediated by glutamate. The chain is Casein kinase I isoform delta (CSNK1D) from Pongo abelii (Sumatran orangutan).